The sequence spans 445 residues: 4-hydroxyphenylpyruvate dioxygenase (445 aa).

The span at 1 to 11 (MGHQNAAVSEN) shows a compositional bias: polar residues. Residues 1-20 (MGHQNAAVSENQNHDDGAAS) form a disordered region. 2 VOC domains span residues 46–192 (RFHH…YVSY) and 223–383 (RLDH…IFTK). Fe cation is bound by residues His226, His308, and Glu394.

It belongs to the 4HPPD family. As to quaternary structure, homodimer. Fe cation is required as a cofactor.

The protein resides in the cytoplasm. The enzyme catalyses 3-(4-hydroxyphenyl)pyruvate + O2 = homogentisate + CO2. Its pathway is amino-acid degradation; L-phenylalanine degradation; acetoacetate and fumarate from L-phenylalanine: step 3/6. The protein operates within cofactor biosynthesis; prenylquinone biosynthesis. Catalyzes the conversion of 4-hydroxyphenylpyruvic acid to homogentisic acid, one of the steps in tyrosine catabolism. In Arabidopsis thaliana (Mouse-ear cress), this protein is 4-hydroxyphenylpyruvate dioxygenase (HPD).